We begin with the raw amino-acid sequence, 206 residues long: MSRTKSSKRWLQEHFDDVYVKKAQAEGYRSRAVYKLKEIDDKESLIKPGMTVVDLGAAPGGWTQYASEKMKGSGRLVALDILPMDALPNVEFILGDFREDNVLQELINLIPQRTLDLLLSDMAPNMSGSSAIDIPRAMYLVELAFDFAEKMLKPGGNMLVKIFHGSGFDELVKQARASFEKVVIRKPSASRSRSKETYLLAKGYNL.

S-adenosyl-L-methionine is bound by residues Gly60, Trp62, Asp80, Asp96, and Asp121. The Proton acceptor role is filled by Lys161.

The protein belongs to the class I-like SAM-binding methyltransferase superfamily. RNA methyltransferase RlmE family.

The protein localises to the cytoplasm. The catalysed reaction is uridine(2552) in 23S rRNA + S-adenosyl-L-methionine = 2'-O-methyluridine(2552) in 23S rRNA + S-adenosyl-L-homocysteine + H(+). In terms of biological role, specifically methylates the uridine in position 2552 of 23S rRNA at the 2'-O position of the ribose in the fully assembled 50S ribosomal subunit. The protein is Ribosomal RNA large subunit methyltransferase E of Legionella pneumophila (strain Corby).